The following is an 874-amino-acid chain: Protein Son (874 aa).

Disordered regions lie at residues 1 to 45 (MTEN…ERPD), 68 to 98 (RRSN…NIKP), and 120 to 368 (ELLD…SRDL). The segment covering 12-24 (ETPQVAGSQTNPP) has biased composition (polar residues). The span at 70-89 (SNSNELGNNDESGESESSAS) shows a compositional bias: low complexity. Basic residues-rich tracts occupy residues 128–147 (KKKK…KKKT) and 162–175 (KHKH…HKDI). Basic and acidic residues-rich tracts occupy residues 176 to 219 (RVKD…KDKF) and 226 to 277 (SEKE…ERVR). Residues 705–751 (TGGMGMALLQKMGWKPGEGLGRCKTGSLQPLLLDVKLDKRGLVSRDD) form the G-patch domain. Residues 800 to 870 (HPVCVLNELT…AALCLRSLGI (71 aa)) enclose the DRBM domain.

In terms of tissue distribution, expressed in ovarian nurse cells (at protein level).

The protein resides in the nucleus. Functionally, RNA-binding protein that protects nascent transcripts containing intronic transposable sequences, known as INE-1, from being degraded by DIP1. Modulates DIP1 activity by repressing its sumoylation levels. This ensures that intronic sequences will be degradated only after splicing. In the ovaries, regulates germline stem cells (GSCs) self-renewal by repressing the expression of the GSC differentiation-promoting factor Rga. The chain is Protein Son from Drosophila melanogaster (Fruit fly).